A 337-amino-acid polypeptide reads, in one-letter code: Glyceraldehyde-3-phosphate dehydrogenase (337 aa).

Residues arginine 12–isoleucine 13, aspartate 34, and arginine 79 each bind NAD(+). D-glyceraldehyde 3-phosphate is bound by residues serine 150–threonine 152, threonine 181, threonine 210–glycine 211, and arginine 233. Residue cysteine 151 is the Nucleophile of the active site. Asparagine 315 is a binding site for NAD(+).

It belongs to the glyceraldehyde-3-phosphate dehydrogenase family. In terms of assembly, homotetramer.

It is found in the cytoplasm. It catalyses the reaction D-glyceraldehyde 3-phosphate + phosphate + NAD(+) = (2R)-3-phospho-glyceroyl phosphate + NADH + H(+). It functions in the pathway carbohydrate degradation; glycolysis; pyruvate from D-glyceraldehyde 3-phosphate: step 1/5. The chain is Glyceraldehyde-3-phosphate dehydrogenase (GPD) from Omphalotus olearius (Jack o'lantern).